Reading from the N-terminus, the 436-residue chain is Mannan endo-1,4-beta-mannosidase F (436 aa).

The signal sequence occupies residues 1-18; that stretch reads MRSLSSVALLSAIGAASA. Residues 19–54 enclose the CBM1 domain; that stretch reads QAGPWGQCAGISHTGPTTCESGWSCVYLNDWYSQCQ. Residues 60-88 form a disordered region; sequence SSSTTVSSTKQPSSTVAAPSSTTSAHTLP. The ser-rich linker stretch occupies residues 79-113; that stretch reads SSTTSAHTLPTGSGSFAKTDGLKFNIDGKTKYFAG. Residues 114–436 form a catalytic region; sequence TNAYWLPFLT…CAVIDHISQI (323 aa). Substrate is bound by residues Trp-146 and Asn-260. Glu-261 serves as the catalytic Proton donor. Residue Tyr-336 coordinates substrate. Catalysis depends on Glu-370, which acts as the Nucleophile. Position 400 (Trp-400) interacts with substrate.

It belongs to the glycosyl hydrolase 5 (cellulase A) family.

Its subcellular location is the secreted. The catalysed reaction is Random hydrolysis of (1-&gt;4)-beta-D-mannosidic linkages in mannans, galactomannans and glucomannans.. Endo-1,4-mannanase, a crucial enzyme for depolymerization of seed galactomannans and wood galactoglucomannans. The protein is Mannan endo-1,4-beta-mannosidase F (manF) of Aspergillus clavatus (strain ATCC 1007 / CBS 513.65 / DSM 816 / NCTC 3887 / NRRL 1 / QM 1276 / 107).